Consider the following 727-residue polypeptide: Ankyrin repeat domain-containing protein 6 (727 aa).

ANK repeat units lie at residues 9-38 (ALSERLLVAAYKGQTENVVQLINKGARVAV), 41-70 (HGRTPLHLAANKGHLPVVQILLKAGCDLDV), 74-103 (GDQTALHRATVVGNTEIIAALIHEGCALDR), 107-136 (DGNTALHEASWHGFSQSAKLLIKAGANVLA), 140-169 (AGNTALHLACQNSHSQSTRVLLLAGSRADL), 173-202 (AGDTCLHVAARYNHLSIIRLLLTAFCSVHE), 206-235 (AGDTALHVAAALNHKKVAKILLEAGADTTI), and 239-268 (AGQTPLETARYHNNPEVALLLTKAPQVLRF). The tract at residues 277–386 (KRERLKEERR…HRCSSPPPPH (110 aa)) is disordered. The span at 280–296 (RLKEERRAQSVPRDEVA) shows a compositional bias: basic and acidic residues. Over residues 298-312 (SKGSVSAGDTPSSEQ) the composition is skewed to polar residues. Basic and acidic residues predominate over residues 314–324 (VARKEEAREEF). Residues 363 to 379 (KNLHAHNHPKKRNRHRC) are compositionally biased toward basic residues. Residues 417–446 (LINKLENQLEATVEEIKAELGSVQDKMNTK) adopt a coiled-coil conformation. Over residues 548 to 557 (PAAASDSSPP) the composition is skewed to low complexity. Disordered regions lie at residues 548–586 (PAAASDSSPPVVRPKEKALNSTATQRLQQELSSSDCTGS) and 601–657 (NEAA…TGPH). The span at 566–584 (LNSTATQRLQQELSSSDCT) shows a compositional bias: polar residues. Residues 622 to 633 (KSGKSGPTRHRA) are compositionally biased toward basic residues. A coiled-coil region spans residues 682 to 727 (WYERKIEEARSQANQKAQQDKATLKEHIKSLEEELAKLRTRVQKEN).

In terms of assembly, interacts with AXN1, AXN2 and CSNK1E/CKI-epsilon.

In terms of biological role, recruits CKI-epsilon to the beta-catenin degradation complex that consists of AXN1 or AXN2 and GSK3-beta and allows efficient phosphorylation of beta-catenin, thereby inhibiting beta-catenin/Tcf signals. This Homo sapiens (Human) protein is Ankyrin repeat domain-containing protein 6 (ANKRD6).